A 141-amino-acid polypeptide reads, in one-letter code: Hemoglobin subunit alpha (141 aa).

One can recognise a Globin domain in the interval 1-141; it reads VLSPADKTNV…VSTVLTSKYR (141 aa). The residue at position 3 (serine 3) is a Phosphoserine. An N6-succinyllysine modification is found at lysine 7. Threonine 8 carries the post-translational modification Phosphothreonine. Lysine 11 is subject to N6-succinyllysine. Position 16 is an N6-acetyllysine; alternate (lysine 16). Lysine 16 carries the post-translational modification N6-succinyllysine; alternate. A Phosphotyrosine modification is found at tyrosine 24. At serine 35 the chain carries Phosphoserine. An N6-succinyllysine modification is found at lysine 40. Phosphoserine is present on serine 49. Histidine 58 lines the O2 pocket. Residue histidine 87 participates in heme b binding. Serine 102 is modified (phosphoserine). Threonine 108 is modified (phosphothreonine). A phosphoserine mark is found at serine 124 and serine 131. Threonine 134 and threonine 137 each carry phosphothreonine. Position 138 is a phosphoserine (serine 138).

It belongs to the globin family. Heterotetramer of two alpha chains and two beta chains. Red blood cells.

Involved in oxygen transport from the lung to the various peripheral tissues. Its function is as follows. Hemopressin acts as an antagonist peptide of the cannabinoid receptor CNR1. Hemopressin-binding efficiently blocks cannabinoid receptor CNR1 and subsequent signaling. In Semnopithecus entellus (Northern plains gray langur), this protein is Hemoglobin subunit alpha (HBA).